The chain runs to 103 residues: Gibberellin-regulated protein 13 (103 aa).

Positions 1 to 20 are cleaved as a signal peptide; that stretch reads MATKLSIIVFSIVVLHLLLS.

Belongs to the GASA family. Post-translationally, six disulfide bonds may be present.

The protein resides in the secreted. Functionally, gibberellin-regulated protein that may function in hormonal controlled steps of development such as seed germination, flowering and seed maturation. This Arabidopsis thaliana (Mouse-ear cress) protein is Gibberellin-regulated protein 13 (GASA13).